A 146-amino-acid polypeptide reads, in one-letter code: TGTPVKILVVRNILLLLFCLVVLLVFAQSSFLPPCEPVNETVAVEKEGCPKCLVFQTTICSGHCLTKEPVYKSPFSTVYQHVCTYRDVRYETVRLPDCPPGVDPHITYPVALSCDCSLCTMDTSDCTIESLQPDFCMSQREDFPVY.

Positions 1-28 are cleaved as a signal peptide; it reads TGTPVKILVVRNILLLLFCLVVLLVFAQ. Disulfide bonds link C35–C83, C49–C98, C52–C136, C60–C114, C64–C116, and C119–C126. Residue N39 is glycosylated (N-linked (GlcNAc...) asparagine).

Belongs to the glycoprotein hormones subunit beta family. Heterodimer of an alpha and a beta chain.

The protein resides in the secreted. Its function is as follows. Involved in gametogenesis and steroidogenesis. The protein is Gonadotropin subunit beta-2 (cgbb) of Ctenopharyngodon idella (Grass carp).